We begin with the raw amino-acid sequence, 162 residues long: ATVPLTMDGLDLQKVAGMWHSMAMAASDISLLDSETAPLRVYVQELRPTPRDNLEIILRKWEDNRCVEKKVLAEKTECAAKFNINYLDENELIVLDTDYENYLFFCLENADAPDQNLVCQCLTRTLKADNEVMEKFDRALQTLPVHVRLFFDPTQVAEQCRI.

Intrachain disulfides connect Cys-66–Cys-160 and Cys-106–Cys-119.

The protein belongs to the calycin superfamily. Lipocalin family. In terms of assembly, monomer.

The protein resides in the secreted. In terms of biological role, lactoglobulin is the primary component of whey, it binds retinol and is probably involved in the transport of that molecule. This Felis catus (Cat) protein is Beta-lactoglobulin-1 (LGB1).